A 603-amino-acid polypeptide reads, in one-letter code: Sorting nexin-41 (603 aa).

A disordered region spans residues 1-36 (MNSFRESDEEDNNPFSGTNHLYASGIGAVPEGDDDF). Positions 121–241 (AEGSLGALRI…QKFLNPEYIW (121 aa)) constitute a PX domain. Positions 159, 161, 185, and 208 each coordinate a 1,2-diacyl-sn-glycero-3-phospho-(1D-myo-inositol-3-phosphate).

Belongs to the sorting nexin family.

The protein localises to the endosome membrane. It localises to the endomembrane system. May be required for cytoplasm to vacuole transport (Cvt) and pexophagy. The chain is Sorting nexin-41 (SNX41) from Eremothecium gossypii (strain ATCC 10895 / CBS 109.51 / FGSC 9923 / NRRL Y-1056) (Yeast).